The chain runs to 72 residues: Translation initiation factor IF-1 (72 aa).

Positions 2–72 (AKEDVIEVEG…TRGRITYRYK (71 aa)) constitute an S1-like domain. Y60 carries the post-translational modification Phosphotyrosine.

It belongs to the IF-1 family. As to quaternary structure, component of the 30S ribosomal translation pre-initiation complex which assembles on the 30S ribosome in the order IF-2 and IF-3, IF-1 and N-formylmethionyl-tRNA(fMet); mRNA recruitment can occur at any time during PIC assembly.

The protein localises to the cytoplasm. Its function is as follows. One of the essential components for the initiation of protein synthesis. Stabilizes the binding of IF-2 and IF-3 on the 30S subunit to which N-formylmethionyl-tRNA(fMet) subsequently binds. Helps modulate mRNA selection, yielding the 30S pre-initiation complex (PIC). Upon addition of the 50S ribosomal subunit IF-1, IF-2 and IF-3 are released leaving the mature 70S translation initiation complex. In Halalkalibacterium halodurans (strain ATCC BAA-125 / DSM 18197 / FERM 7344 / JCM 9153 / C-125) (Bacillus halodurans), this protein is Translation initiation factor IF-1.